The following is a 1822-amino-acid chain: Integrin beta-4 (1822 aa).

The first 27 residues, 1–27 (MAGPRPSPWARLLLAALISVSLSGTLA), serve as a signal peptide directing secretion. Topologically, residues 28-710 (NRCKKAPVKS…HKKKDCPPGS (683 aa)) are extracellular. Residues 29 to 73 (RCKKAPVKSCTECVRVDKDCAYCTDEMFRDRRCNTQAELLAAGCQ) enclose the PSI domain. 8 cysteine pairs are disulfide-bonded: Cys-30–Cys-48, Cys-38–Cys-455, Cys-41–Cys-61, Cys-51–Cys-72, Cys-245–Cys-288, Cys-457–Cys-476, Cys-468–Cys-479, and Cys-481–Cys-490. Positions 131–329 (DLYILMDFSN…IPIFAVTNYS (199 aa)) constitute a VWFA domain. Positions 139 and 141 each coordinate Mg(2+). Residues Ser-141, Asp-144, Asp-145, and Asp-176 each contribute to the Ca(2+) site. The involved in NRG1- and IGF1-binding stretch occupies residues 194–199 (WPNSDP). Residues Asn-228, Asp-230, Pro-232, and Glu-233 each coordinate Ca(2+). Glu-233 is a Mg(2+) binding site. Asn-327 carries N-linked (GlcNAc...) asparagine glycosylation. Position 350 (Glu-350) interacts with Ca(2+). I-EGF domains lie at 457-491 (CELQ…QTCN), 492-537 (CSTG…QFCE), 538-574 (YDNF…PSCD), and 575-615 (CPLS…TICE). A glycan (N-linked (GlcNAc...) asparagine) is linked at Asn-491. Disulfide bonds link Cys-492–Cys-520, Cys-503–Cys-518, Cys-512–Cys-523, Cys-525–Cys-536, Cys-543–Cys-557, Cys-551–Cys-562, Cys-564–Cys-573, Cys-575–Cys-598, Cys-582–Cys-596, Cys-590–Cys-601, and Cys-603–Cys-614. The N-linked (GlcNAc...) asparagine glycan is linked to Asn-579. A glycan (N-linked (GlcNAc...) asparagine) is linked at Asn-617. 4 disulfides stabilise this stretch: Cys-626–Cys-671, Cys-632–Cys-651, Cys-635–Cys-648, and Cys-680–Cys-706. Asn-695 carries N-linked (GlcNAc...) asparagine glycosylation. Residues 711 to 733 (FWWLIPLLLLLLPLLALLLLLCW) form a helical membrane-spanning segment. Positions 732–749 (CWKYCACCKACLALLPCC) are palmitoylated on several cysteines. The Cytoplasmic segment spans residues 734–1822 (KYCACCKACL…THMDQQFFQT (1089 aa)). A phosphoserine mark is found at Ser-771, Ser-1069, and Ser-1119. One can recognise a Calx-beta domain in the interval 979–1084 (VNITIIKEQA…QVRRFHVQLS (106 aa)). The tract at residues 1113-1140 (TSQMLSSQPPPHGDLGAPQNPNAKAAGS) is disordered. Fibronectin type-III domains follow at residues 1129 to 1218 (APQN…THQE) and 1222 to 1321 (EPGR…TQPK). The segment at 1400–1444 (LSASSGRSSDAEAPHGPPDDGGAGGKGGSLPRSATPGPPGEHLVN) is disordered. The span at 1418–1427 (DDGGAGGKGG) shows a compositional bias: gly residues. Phosphoserine is present on residues Ser-1454, Ser-1457, and Ser-1474. Thr-1487 bears the Phosphothreonine mark. Phosphoserine is present on Ser-1494. Residues 1495 to 1525 (LTRSEHSHSTTLPRDYSTLTSVSSHDSRLTA) form a disordered region. The span at 1503-1518 (STTLPRDYSTLTSVSS) shows a compositional bias: polar residues. Thr-1530 is modified (phosphothreonine). Fibronectin type-III domains follow at residues 1530–1625 (TPTR…VHPQ) and 1643–1739 (APGP…SQDG). A Phosphoserine modification is found at Ser-1791.

It belongs to the integrin beta chain family. Heterodimer of an alpha and a beta subunit. Beta-4 associates with alpha-6. Interacts (via cytoplasmic region) with COL17A1 (via cytoplasmic region). Interacts (via cytoplasmic region) with DST isoform 3 (via N-terminus). Isoform beta-4a interacts (via cytoplasmic domain) with DST (via N-terminus). Interacts with RAC1. ITGA6:ITGB4 is found in a ternary complex with NRG1 and ERBB3. ITGA6:ITGB4 is found in a ternary complex with IGF1 and IGF1R. ITGA6:ITGB4 interacts with IGF2. Interacts with TMEM268; this interaction prevents ITGB4 degradation. In terms of processing, palmitoylated by DHHC3 at several cysteines of the membrane-proximal region, enhancing stability and cell surface expression. Palmitoylation also promotes secondary association with tertaspanins. Integrin alpha-6/beta-4 is predominantly expressed by epithelia. Isoform beta-4D is also expressed in colon and placenta. Isoform beta-4E is also expressed in epidermis, lung, duodenum, heart, spleen and stomach.

It localises to the cell membrane. It is found in the cell junction. The protein localises to the hemidesmosome. Its function is as follows. Integrin alpha-6/beta-4 is a receptor for laminin. Plays a critical structural role in the hemidesmosome of epithelial cells. Is required for the regulation of keratinocyte polarity and motility. ITGA6:ITGB4 binds to NRG1 (via EGF domain) and this binding is essential for NRG1-ERBB signaling. ITGA6:ITGB4 binds to IGF1 and this binding is essential for IGF1 signaling. ITGA6:ITGB4 binds to IGF2 and this binding is essential for IGF2 signaling. The sequence is that of Integrin beta-4 (ITGB4) from Homo sapiens (Human).